The following is a 155-amino-acid chain: NADPH-dependent 7-cyano-7-deazaguanine reductase (155 aa).

Over residues Met1–Ala20 the composition is skewed to polar residues. A disordered region spans residues Met1–Ala26. Cys53 (thioimide intermediate) is an active-site residue. The Proton donor role is filled by Asp60. Substrate-binding positions include Val75–Ser77 and His94–Glu95.

This sequence belongs to the GTP cyclohydrolase I family. QueF type 1 subfamily.

It localises to the cytoplasm. The catalysed reaction is 7-aminomethyl-7-carbaguanine + 2 NADP(+) = 7-cyano-7-deazaguanine + 2 NADPH + 3 H(+). It functions in the pathway tRNA modification; tRNA-queuosine biosynthesis. Its function is as follows. Catalyzes the NADPH-dependent reduction of 7-cyano-7-deazaguanine (preQ0) to 7-aminomethyl-7-deazaguanine (preQ1). This chain is NADPH-dependent 7-cyano-7-deazaguanine reductase, found in Rhizobium etli (strain CIAT 652).